A 624-amino-acid polypeptide reads, in one-letter code: Probable potassium transport system protein Kup 1 (624 aa).

Transmembrane regions (helical) follow at residues 10-30 (LALG…LYAL), 48-68 (LSLI…MIIF), 94-114 (PVFY…GMLT), 133-153 (LYPY…SLQA), 159-179 (IGYL…ILGI), 210-230 (FLLG…ADIG), 242-262 (FFIA…NLIV), 270-290 (PFFM…ATVA), 331-351 (IYVP…CLAF), 363-383 (IAVN…AVSI), 388-408 (TFNV…FLGA), and 413-433 (FITG…IMYS).

This sequence belongs to the HAK/KUP transporter (TC 2.A.72) family.

The protein resides in the cell inner membrane. The enzyme catalyses K(+)(in) + H(+)(in) = K(+)(out) + H(+)(out). Its function is as follows. Transport of potassium into the cell. Likely operates as a K(+):H(+) symporter. This is Probable potassium transport system protein Kup 1 from Legionella pneumophila (strain Paris).